The sequence spans 141 residues: Putative pre-16S rRNA nuclease (141 aa).

It belongs to the YqgF nuclease family.

Its subcellular location is the cytoplasm. Could be a nuclease involved in processing of the 5'-end of pre-16S rRNA. This is Putative pre-16S rRNA nuclease from Natranaerobius thermophilus (strain ATCC BAA-1301 / DSM 18059 / JW/NM-WN-LF).